A 165-amino-acid chain; its full sequence is Acireductone dioxygenase (165 aa).

Fe(2+)-binding residues include histidine 90, histidine 92, glutamate 96, and histidine 134. Residues histidine 90, histidine 92, glutamate 96, and histidine 134 each contribute to the Ni(2+) site.

This sequence belongs to the acireductone dioxygenase (ARD) family. In terms of assembly, monomer. Fe(2+) serves as cofactor. The cofactor is Ni(2+).

The enzyme catalyses 1,2-dihydroxy-5-(methylsulfanyl)pent-1-en-3-one + O2 = 3-(methylsulfanyl)propanoate + CO + formate + 2 H(+). It catalyses the reaction 1,2-dihydroxy-5-(methylsulfanyl)pent-1-en-3-one + O2 = 4-methylsulfanyl-2-oxobutanoate + formate + 2 H(+). It functions in the pathway amino-acid biosynthesis; L-methionine biosynthesis via salvage pathway; L-methionine from S-methyl-5-thio-alpha-D-ribose 1-phosphate: step 5/6. Its function is as follows. Catalyzes 2 different reactions between oxygen and the acireductone 1,2-dihydroxy-3-keto-5-methylthiopentene (DHK-MTPene) depending upon the metal bound in the active site. Fe-containing acireductone dioxygenase (Fe-ARD) produces formate and 2-keto-4-methylthiobutyrate (KMTB), the alpha-ketoacid precursor of methionine in the methionine recycle pathway. Ni-containing acireductone dioxygenase (Ni-ARD) produces methylthiopropionate, carbon monoxide and formate, and does not lie on the methionine recycle pathway. This chain is Acireductone dioxygenase, found in Rhodopseudomonas palustris (strain ATCC BAA-98 / CGA009).